The chain runs to 380 residues: Cytochrome b (380 aa).

Transmembrane regions (helical) follow at residues tyrosine 34–methionine 54, tryptophan 78–isoleucine 99, tryptophan 114–leucine 134, and phenylalanine 179–leucine 199. Histidine 84 and histidine 98 together coordinate heme b. Positions 183 and 197 each coordinate heme b. Position 202 (histidine 202) interacts with a ubiquinone. The next 4 membrane-spanning stretches (helical) occupy residues tyrosine 227–asparagine 247, leucine 289–histidine 309, leucine 321–glycine 341, and phenylalanine 348–proline 368.

The protein belongs to the cytochrome b family. In terms of assembly, the cytochrome bc1 complex contains 3 respiratory subunits (MT-CYB, CYC1 and UQCRFS1), 2 core proteins (UQCRC1 and UQCRC2) and probably 6 low-molecular weight proteins. The cofactor is heme b.

It localises to the mitochondrion inner membrane. Component of the ubiquinol-cytochrome c reductase complex (complex III or cytochrome b-c1 complex) that is part of the mitochondrial respiratory chain. The b-c1 complex mediates electron transfer from ubiquinol to cytochrome c. Contributes to the generation of a proton gradient across the mitochondrial membrane that is then used for ATP synthesis. The protein is Cytochrome b (mt-cyb) of Typhlonectes natans (Rubber eel).